The following is a 407-amino-acid chain: F-box protein SKIP23 (407 aa).

The region spanning 2–50 (VDWSTLPKDLLDLISKSLESSFDLIQFRSVCSSWRSAAEPKSPLPTHHL) is the F-box domain.

Part of a SCF (ASK-cullin-F-box) protein ligase complex. Interacts with SKP1A/ASK1.

The protein localises to the nucleus. Its pathway is protein modification; protein ubiquitination. Its function is as follows. Component of SCF(ASK-cullin-F-box) E3 ubiquitin ligase complexes, which may mediate the ubiquitination and subsequent proteasomal degradation of target proteins. The chain is F-box protein SKIP23 (SKIP23) from Arabidopsis thaliana (Mouse-ear cress).